The primary structure comprises 469 residues: 3-isopropylmalate dehydratase large subunit (469 aa).

[4Fe-4S] cluster-binding residues include C347, C410, and C413.

It belongs to the aconitase/IPM isomerase family. LeuC type 1 subfamily. As to quaternary structure, heterodimer of LeuC and LeuD. [4Fe-4S] cluster is required as a cofactor.

The catalysed reaction is (2R,3S)-3-isopropylmalate = (2S)-2-isopropylmalate. Its pathway is amino-acid biosynthesis; L-leucine biosynthesis; L-leucine from 3-methyl-2-oxobutanoate: step 2/4. Functionally, catalyzes the isomerization between 2-isopropylmalate and 3-isopropylmalate, via the formation of 2-isopropylmaleate. This Ralstonia nicotianae (strain ATCC BAA-1114 / GMI1000) (Ralstonia solanacearum) protein is 3-isopropylmalate dehydratase large subunit.